We begin with the raw amino-acid sequence, 163 residues long: Nucleotide-binding protein YajQ (163 aa).

Belongs to the YajQ family.

Its function is as follows. Nucleotide-binding protein. The sequence is that of Nucleotide-binding protein YajQ from Shigella dysenteriae serotype 1 (strain Sd197).